The following is a 266-amino-acid chain: Large ribosomal subunit protein uL4 (266 aa).

The protein belongs to the universal ribosomal protein uL4 family. As to quaternary structure, part of the 50S ribosomal subunit.

Functionally, one of the primary rRNA binding proteins, this protein initially binds near the 5'-end of the 23S rRNA. It is important during the early stages of 50S assembly. It makes multiple contacts with different domains of the 23S rRNA in the assembled 50S subunit and ribosome. Forms part of the polypeptide exit tunnel. The chain is Large ribosomal subunit protein uL4 from Sulfolobus acidocaldarius (strain ATCC 33909 / DSM 639 / JCM 8929 / NBRC 15157 / NCIMB 11770).